The sequence spans 299 residues: Recombination-associated protein RdgC (299 aa).

The protein belongs to the RdgC family.

The protein resides in the cytoplasm. The protein localises to the nucleoid. May be involved in recombination. This is Recombination-associated protein RdgC from Bordetella bronchiseptica (strain ATCC BAA-588 / NCTC 13252 / RB50) (Alcaligenes bronchisepticus).